We begin with the raw amino-acid sequence, 227 residues long: Phosphoglycolate phosphatase (227 aa).

Catalysis depends on Asp8, which acts as the Nucleophile. Positions 8 and 10 each coordinate Mg(2+). Substrate is bound at residue Lys150. Mg(2+) contacts are provided by Asp173 and Asp177.

It belongs to the archaeal SPP-like hydrolase family. The cofactor is Mg(2+).

The catalysed reaction is 2-phosphoglycolate + H2O = glycolate + phosphate. In terms of biological role, catalyzes the dephosphorylation of 2-phosphoglycolate. This Sulfolobus acidocaldarius (strain ATCC 33909 / DSM 639 / JCM 8929 / NBRC 15157 / NCIMB 11770) protein is Phosphoglycolate phosphatase.